The following is a 222-amino-acid chain: 7-cyano-7-deazaguanine synthase (222 aa).

ATP is bound at residue 14–24 (FSGGQDSTTCL). Residues Cys190, Cys199, Cys202, and Cys205 each contribute to the Zn(2+) site.

It belongs to the QueC family. In terms of assembly, homodimer. The cofactor is Zn(2+).

The catalysed reaction is 7-carboxy-7-deazaguanine + NH4(+) + ATP = 7-cyano-7-deazaguanine + ADP + phosphate + H2O + H(+). Its pathway is purine metabolism; 7-cyano-7-deazaguanine biosynthesis. Catalyzes the ATP-dependent conversion of 7-carboxy-7-deazaguanine (CDG) to 7-cyano-7-deazaguanine (preQ(0)). The protein is 7-cyano-7-deazaguanine synthase of Staphylococcus aureus (strain Mu3 / ATCC 700698).